We begin with the raw amino-acid sequence, 209 residues long: V-type ATP synthase subunit D (209 aa).

Belongs to the V-ATPase D subunit family.

In terms of biological role, produces ATP from ADP in the presence of a proton gradient across the membrane. This is V-type ATP synthase subunit D from Thermoanaerobacter pseudethanolicus (strain ATCC 33223 / 39E) (Clostridium thermohydrosulfuricum).